The sequence spans 223 residues: Urease accessory protein UreF (223 aa).

The protein belongs to the UreF family. UreD, UreF and UreG form a complex that acts as a GTP-hydrolysis-dependent molecular chaperone, activating the urease apoprotein by helping to assemble the nickel containing metallocenter of UreC. The UreE protein probably delivers the nickel.

The protein resides in the cytoplasm. In terms of biological role, required for maturation of urease via the functional incorporation of the urease nickel metallocenter. The sequence is that of Urease accessory protein UreF from Paenarthrobacter aurescens (strain TC1).